A 359-amino-acid chain; its full sequence is Protein disulfide-isomerase tigA (359 aa).

Residues 1 to 19 form the signal peptide; sequence MVRLSNLVSCLGLASAVTA. Thioredoxin domains lie at 20–129 and 131–250; these read AVVD…EKTG and KPRG…EKTG. Catalysis depends on nucleophile residues Cys-49, Cys-52, Cys-169, and Cys-172. Intrachain disulfides connect Cys-49/Cys-52 and Cys-169/Cys-172. A Prevents secretion from ER motif is present at residues 356-359; it reads KDEL.

The protein belongs to the protein disulfide isomerase family.

The protein localises to the endoplasmic reticulum lumen. It carries out the reaction Catalyzes the rearrangement of -S-S- bonds in proteins.. The polypeptide is Protein disulfide-isomerase tigA (tigA) (Aspergillus niger).